The sequence spans 245 residues: Peroxisome biogenesis protein 19-2 (245 aa).

A disordered region spans residues Ala-17–Ser-106. 2 stretches are compositionally biased toward basic and acidic residues: residues Val-33–Glu-44 and Ala-71–Lys-92. Over residues Ser-96–Gly-105 the composition is skewed to polar residues. Cys-242 carries the post-translational modification Cysteine methyl ester. Cys-242 carries S-farnesyl cysteine lipidation. Positions Cys-243–Met-245 are cleaved as a propeptide — removed in mature form.

This sequence belongs to the peroxin-19 family. Dimer. Interacts with PEX10 (via C-terminus). May be farnesylated. As to expression, expressed in roots, leaves, flowers, siliques and stems. Highest expression in roots and leaves.

It is found in the cytoplasm. The protein resides in the peroxisome membrane. In terms of biological role, contributes to morphology determination of peroxisomes, but not to import of peroxisomal matrix proteins. Required for proper post-translational import and stabilization of peroxisomal membrane proteins (PMPs). Acts as a cytosolic import receptor for PMPs and delivers them to the docking factor PEX3 at the peroxisomal membrane for subsequent insertion into the membrane. Acts as a chaperone in stabilizing or maintaining PMPs in the lipid bilayer. In Arabidopsis thaliana (Mouse-ear cress), this protein is Peroxisome biogenesis protein 19-2 (PEX19-2).